Reading from the N-terminus, the 260-residue chain is Alpha- and beta-fibrinogenase OhS1 (260 aa).

Residues methionine 1–alanine 18 form the signal peptide. The propeptide occupies valine 19–arginine 24. In terms of domain architecture, Peptidase S1 spans isoleucine 25–alanine 248. 6 cysteine pairs are disulfide-bonded: cysteine 31–cysteine 163, cysteine 50–cysteine 66, cysteine 98–cysteine 255, cysteine 142–cysteine 209, cysteine 174–cysteine 188, and cysteine 199–cysteine 224. An N-linked (GlcNAc...) asparagine glycan is attached at asparagine 44. The Charge relay system role is filled by histidine 65. N-linked (GlcNAc...) asparagine glycosylation occurs at asparagine 79. The active-site Charge relay system is aspartate 110. 2 N-linked (GlcNAc...) asparagine glycosylation sites follow: asparagine 117 and asparagine 121. Serine 203 (charge relay system) is an active-site residue. An N-linked (GlcNAc...) asparagine glycan is attached at asparagine 250.

It belongs to the peptidase S1 family. Snake venom subfamily. In terms of assembly, monomer. As to expression, expressed by the venom gland.

The protein localises to the secreted. With respect to regulation, completely inhibited by NPGB, PMSF, diisopropylfluorophosphate (DFP), benzamidine and soybean trypsin inhibitor. Not inhibited by EDTA. In terms of biological role, snake venom serine protease that possesses potent fibrinogenolytic (on both alpha- (FGA) and beta-chains (FGB)) and amidolytic activities. Selectively cleaves Arg-|-Xaa or Lys-|-Xaa bonds. The protein is Alpha- and beta-fibrinogenase OhS1 of Ophiophagus hannah (King cobra).